A 299-amino-acid chain; its full sequence is Putative syntaxin-2 (299 aa).

Topologically, residues 1–270 (MRDRLNEFQS…SAMRKKICVA (270 aa)) are cytoplasmic. The stretch at 112–146 (EKRMRQNQLELLKDNLNKLINLFNETHQDYKSRVS) forms a coiled coil. The region spanning 193-255 (YEDVKKRHGE…KQGSANVKTA (63 aa)) is the t-SNARE coiled-coil homology domain. A helical; Anchor for type IV membrane protein transmembrane segment spans residues 271–291 (AILITILLILIIVAIILAVVL). Residues 292–299 (SRGNNNNK) lie on the Extracellular side of the membrane.

It belongs to the syntaxin family.

Its subcellular location is the membrane. Potentially involved in docking of synaptic vesicles at presynaptic active zones. This Caenorhabditis elegans protein is Putative syntaxin-2 (syx-2).